Consider the following 732-residue polypeptide: ATP-dependent RNA helicase DBP7 (732 aa).

A disordered region spans residues 1–91; sequence MIEDDGMLLN…QSNNESVKDV (91 aa). Basic and acidic residues-rich tracts occupy residues 42–56 and 64–75; these read MMME…KTFE and DTNKKPKSDSSG. Polar residues predominate over residues 76–86; sequence RKSYNQQSNNE. A Q motif motif is present at residues 144–173; the sequence is DNFDSLKIEQQLVNHLNEKMRIQKPTSIQK. Positions 178–372 constitute a Helicase ATP-binding domain; it reads QLLSSKNNDL…NVALQNYKMI (195 aa). ATP is bound at residue 191–198; that stretch reads AQTGSGKT. Residues 307-310 carry the DEAD box motif; sequence DEAD. In terms of domain architecture, Helicase C-terminal spans 420–599; it reads QKKKKLDYVS…KLVNYTNDLL (180 aa). A disordered region spans residues 692–711; that stretch reads MGLQNTKNGGEAKKNSKESA. Residues 701-711 show a composition bias toward basic and acidic residues; sequence GEAKKNSKESA.

The protein belongs to the DEAD box helicase family. DDX31/DBP7 subfamily.

It is found in the nucleus. It localises to the nucleolus. The enzyme catalyses ATP + H2O = ADP + phosphate + H(+). ATP-binding RNA helicase involved in the biogenesis of 60S ribosomal subunits and is required for the normal formation of 25S and 5.8S rRNAs. This is ATP-dependent RNA helicase DBP7 (DBP7) from Vanderwaltozyma polyspora (strain ATCC 22028 / DSM 70294 / BCRC 21397 / CBS 2163 / NBRC 10782 / NRRL Y-8283 / UCD 57-17) (Kluyveromyces polysporus).